A 346-amino-acid chain; its full sequence is MSTPAADGFRMPAEWTPHERTWMAWPGPNPTFDHPDDLAESCRAWADVARAIRRFEPVTVVCGPGRSAEARDLLGPGIDTVERDLDDAWMRDIGPTFLTDGKGGLAAVDWTFNGWGAQSWARWEHDAKIAAYVGDLAGAKTYASKLVNEGGAIHVDGEGTVLLTETVQLGAERNPGWTREQVETEIHAHLGTSKAIWLPRGLTGDYPPHGFGTLGHVDIVAAFARPGVVVAHHQPDPAHPDHEVSKEVIGLLKAATDAHGRRIEVVEVPAPTVLEADGHWADYSYINHYLCNGGVVLCGFDDPRDETAAGIFRRLFPERTVTLVDARTIFSGGGGIHCITQQQPKN.

The active-site Amidino-cysteine intermediate is Cys-338.

It belongs to the agmatine deiminase family.

The catalysed reaction is agmatine + H2O = N-carbamoylputrescine + NH4(+). In Streptomyces avermitilis (strain ATCC 31267 / DSM 46492 / JCM 5070 / NBRC 14893 / NCIMB 12804 / NRRL 8165 / MA-4680), this protein is Putative agmatine deiminase.